Consider the following 366-residue polypeptide: DNA replication and repair protein RecF (366 aa).

Residue 30–37 (GRNAQGKT) participates in ATP binding.

It belongs to the RecF family.

Its subcellular location is the cytoplasm. Functionally, the RecF protein is involved in DNA metabolism; it is required for DNA replication and normal SOS inducibility. RecF binds preferentially to single-stranded, linear DNA. It also seems to bind ATP. The protein is DNA replication and repair protein RecF of Streptococcus thermophilus (strain ATCC BAA-250 / LMG 18311).